A 183-amino-acid polypeptide reads, in one-letter code: uncharacterized protein (183 aa).

A run of 4 helical transmembrane segments spans residues 37-59 (LFGY…PRQF), 79-98 (AILL…VTSV), 110-132 (WRTF…VLVL), and 142-161 (AFYA…TYVF).

The protein resides in the cell membrane. This is an uncharacterized protein from Archaeoglobus fulgidus (strain ATCC 49558 / DSM 4304 / JCM 9628 / NBRC 100126 / VC-16).